We begin with the raw amino-acid sequence, 154 residues long: MKNNLINMDEINKLIKPIVEELNYELYYIEYVREQNENYLRIYIDSSKGINLEDCEKVSRKVSDILDEKDPISDSYYLEVSSPGIERVLYTEEHLHKYTNNQIIVKLAKLFEGSREHQGNLISFNDDTVTIEKENESINIPRERIKKIILKGEF.

The protein belongs to the RimP family.

The protein localises to the cytoplasm. Required for maturation of 30S ribosomal subunits. This is Ribosome maturation factor RimP from Clostridium novyi (strain NT).